Consider the following 229-residue polypeptide: Aquaporin Z (229 aa).

The next 2 helical transmembrane spans lie at 8–28 and 33–53; these read FLGTFWLVLGGCGSAVLAAGF and IGFAGVALAFGLTVVTMAYAI. The NPA 1 signature appears at 62-64; it reads NPA. The next 3 helical transmembrane spans lie at 88-108, 129-149, and 158-178; these read VLGAIAAGAVLYVIASGGAGF, LLAALVCEVVMTMFFLLVIMG, and GFAPLAIGLALTLIHLISIPV. The short motif at 184 to 186 is the NPA 2 element; the sequence is NPA. A helical membrane pass occupies residues 192–212; that stretch reads ALFVGGWAVQQLWLFWLAPII.

It belongs to the MIP/aquaporin (TC 1.A.8) family. In terms of assembly, homotetramer.

Its subcellular location is the cell inner membrane. The catalysed reaction is H2O(in) = H2O(out). In terms of biological role, channel that permits osmotically driven movement of water in both directions. It is involved in the osmoregulation and in the maintenance of cell turgor during volume expansion in rapidly growing cells. It mediates rapid entry or exit of water in response to abrupt changes in osmolarity. This is Aquaporin Z from Chromobacterium violaceum (strain ATCC 12472 / DSM 30191 / JCM 1249 / CCUG 213 / NBRC 12614 / NCIMB 9131 / NCTC 9757 / MK).